The sequence spans 535 residues: 3-hydroxyindolin-2-one monooxygenase (535 aa).

2 helical membrane passes run valine 14–isoleucine 34 and isoleucine 469–tyrosine 489. Cysteine 470 is a heme binding site.

Belongs to the cytochrome P450 family. Requires heme as cofactor.

The protein localises to the membrane. It catalyses the reaction 3-hydroxyindolin-2-one + reduced [NADPH--hemoprotein reductase] + O2 = 2-hydroxy-2H-1,4-benzoxazin-3(4H)-one + oxidized [NADPH--hemoprotein reductase] + H2O + H(+). It participates in secondary metabolite biosynthesis; 2,4-dihydroxy-1,4-benzoxazin-3-one biosynthesis; 2,4-dihydroxy-1,4-benzoxazin-3-one from indoleglycerol phosphate: step 4/5. In terms of biological role, catalyzes the conversion of 3-hydroxyindolin-2-one to 2-hydroxy-1,4-benzoxazin-3-one (HBOA). The sequence is that of 3-hydroxyindolin-2-one monooxygenase (CYP71C1) from Zea mays (Maize).